The primary structure comprises 315 residues: Olfactory receptor 10H2 (315 aa).

Topologically, residues 1 to 25 are extracellular; the sequence is MLGLNHTSMSEFILVGFSAFPHLQL. The N-linked (GlcNAc...) asparagine glycan is linked to asparagine 5. The helical transmembrane segment at 26–46 threads the bilayer; the sequence is MLFLLFLLMYLFTLLGNLLIM. Topologically, residues 47–54 are cytoplasmic; it reads ATVWSERS. A helical membrane pass occupies residues 55 to 75; it reads LHTPMYLFLCVLSVSEILYTV. At 76–99 the chain is on the extracellular side; the sequence is AIIPRMLADLLSTQRSIAFLACAS. A disulfide bond links cysteine 97 and cysteine 189. A helical membrane pass occupies residues 100–120; the sequence is QMFFSFSFGFTHSFLLTVMGY. At 121–139 the chain is on the cytoplasmic side; sequence DRYVAICHPLRYNVLMSPR. A helical membrane pass occupies residues 140–160; it reads GCACLVGCSWAGGSVMGMVVT. Topologically, residues 161 to 197 are extracellular; the sequence is SAIFQLTFCGSHEIQHFLCHVPPLLKLACGNNVPAVA. A helical membrane pass occupies residues 198–218; sequence LGVGLVCIMALLGCFLLILLS. Residues 219–238 lie on the Cytoplasmic side of the membrane; that stretch reads YAFIVADILKIPSAEGRNKA. A helical transmembrane segment spans residues 239-259; sequence FSTCASHLIVVIVHYGFASVI. Residues 260–272 lie on the Extracellular side of the membrane; that stretch reads YLKPKGPHSQEGD. The chain crosses the membrane as a helical span at residues 273 to 293; the sequence is TLMATTYAVLTPFLSPIIFSL. Topologically, residues 294 to 315 are cytoplasmic; it reads RNKELKVAMKRTFLSTLYSSGT.

The protein belongs to the G-protein coupled receptor 1 family.

The protein resides in the cell membrane. Functionally, odorant receptor. The protein is Olfactory receptor 10H2 (OR10H2) of Homo sapiens (Human).